A 431-amino-acid polypeptide reads, in one-letter code: E3 ubiquitin-protein ligase marc-3 (431 aa).

Residues 5–74 (NASLGPAVCR…EICKFAFKIK (70 aa)) form an RING-CH-type zinc finger. Positions 13, 16, 38, 40, 48, 51, 64, and 67 each coordinate Zn(2+). 2 consecutive transmembrane segments (helical) span residues 98 to 118 (PFID…GVFM) and 157 to 177 (LFLF…VSAL). Disordered stretches follow at residues 267–289 (TSPD…FGRR) and 327–349 (SRAT…RDMR). A compositionally biased stretch (basic and acidic residues) spans 273–282 (NTHHHDESRN).

Its subcellular location is the cell membrane. The protein localises to the endosome membrane. The enzyme catalyses S-ubiquitinyl-[E2 ubiquitin-conjugating enzyme]-L-cysteine + [acceptor protein]-L-lysine = [E2 ubiquitin-conjugating enzyme]-L-cysteine + N(6)-ubiquitinyl-[acceptor protein]-L-lysine.. It functions in the pathway protein modification; protein ubiquitination. Its function is as follows. E3 ubiquitin-protein ligase which positively regulates the fast polyspermy block during fertilization, preventing entry of more than one sperm into the oocyte. After fertilization, required in the zygote for the selective degradation of a subset of maternal membrane proteins including cav-1, chs-1 and rme-2, probably by mediating their K63-linked polyubiquitination. The protein is E3 ubiquitin-protein ligase marc-3 of Caenorhabditis elegans.